Consider the following 26-residue polypeptide: Orexigenic neuropeptide 26RFa (26 aa).

Residue Phe26 is modified to Phenylalanine amide.

In terms of tissue distribution, brain.

Its subcellular location is the secreted. Functionally, may have orexigenic activity. May promote aldosterone secretion by the adrenal gland. The sequence is that of Orexigenic neuropeptide 26RFa from Pelophylax lessonae (Pool frog).